Consider the following 274-residue polypeptide: Large ribosomal subunit protein uL2c (274 aa).

2 disordered regions span residues Met1–Val22 and Pro225–Lys274.

Belongs to the universal ribosomal protein uL2 family. Part of the 50S ribosomal subunit.

The protein resides in the plastid. Its subcellular location is the chloroplast. The polypeptide is Large ribosomal subunit protein uL2c (rpl2) (Silene latifolia (White campion)).